The chain runs to 950 residues: Protocadherin alpha-13 (950 aa).

An N-terminal signal peptide occupies residues Met1 to Gly29. At Gln30–Asn697 the chain is on the extracellular side. Cadherin domains are found at residues Ser34–Phe133, Pro134–Phe242, Tyr243–Val350, Thr351–Phe455, Ala456–Leu565, and Met581–Ala678. Residues Asn257 and Asn265 are each glycosylated (N-linked (GlcNAc...) asparagine). Asn548 carries N-linked (GlcNAc...) asparagine glycosylation. The chain crosses the membrane as a helical span at residues Val698 to Tyr718. Residues Thr719–Gln950 are Cytoplasmic-facing. PXXP repeat units follow at residues Pro734–Pro737, Pro774–Pro777, Pro799–Pro802, Pro832–Pro835, Pro873–Pro876, and Pro891–Pro894. Positions Pro734–Pro894 are 6 X 4 AA repeats of P-X-X-P. Disordered stretches follow at residues Leu780–Trp806 and Arg829–Gln950. Positions Gly787 to Arg800 are enriched in basic and acidic residues. Residues Asp909–Lys923 are compositionally biased toward basic and acidic residues.

The protein resides in the cell membrane. Its function is as follows. Potential calcium-dependent cell-adhesion protein. May be involved in the establishment and maintenance of specific neuronal connections in the brain. The protein is Protocadherin alpha-13 (PCDHA13) of Homo sapiens (Human).